A 303-amino-acid chain; its full sequence is T-box protein 38 (303 aa).

The segment at residues Leu14–Ser195 is a DNA-binding region (T-box). Residues Phe193–Ser225 are disordered. The segment covering Asp204–Pro213 has biased composition (low complexity).

The protein resides in the nucleus. Functionally, transcription factor. Required for mesodermal induction, acting redundantly with transcription factor tbx-37. Together with tbx-37, acts by inducing cell fates in the AB lineage, thereby playing a role in development of the anterior pharynx. This Caenorhabditis elegans protein is T-box protein 38 (tbx-38).